Here is a 535-residue protein sequence, read N- to C-terminus: Potassium channel subfamily K member 10 (535 aa).

The Cytoplasmic portion of the chain corresponds to 1 to 68 (MYFSYIGYFF…GLQTVMKWKT (68 aa)). Residues 69–89 (VVAIFVVVVVYLVTGGLVFRA) traverse the membrane as a helical segment. The pore-forming intramembrane region spans 151-177 (LGSAFFFAGTVITTIGYGNIAPSTEGG). 4 residues coordinate K(+): Thr164, Ile165, Gly166, and Tyr167. Residues 164–169 (TIGYGN) form a selectivity filter 1 region. A helical membrane pass occupies residues 179 to 199 (IFCILYAIFGIPLFGFLLAGI). The Cytoplasmic portion of the chain corresponds to 200–230 (GDQLGTIFGKSIARVEKVFRKKQVSQTKIRV). A helical transmembrane segment spans residues 231–251 (ISTILFILAGCIVFVTIPAVI). The pore-forming intramembrane region spans 260 to 291 (ALESIYFVVVTLTTVGFGDFVAGGNAGINYRE). The K(+) site is built by Thr273, Val274, Gly275, and Phe276. The selectivity filter 2 stretch occupies residues 273-278 (TVGFGD). The helical transmembrane segment at 296 to 316 (LVWFWILVGLAYFAAVLSMIG) threads the bilayer. At 317–535 (DWLRVLSKKT…ENNSLLEDRN (219 aa)) the chain is on the cytoplasmic side. Disordered stretches follow at residues 410-438 (QESI…ASED) and 510-535 (EMEN…EDRN). Residues 525 to 535 (LENNSLLEDRN) are compositionally biased toward polar residues.

Homodimer; disulfide-linked. Forms heterodimers with other 2-pore domain K(+) channel subunits, such as KCNK2, KCNK4 and KCNK18. In terms of tissue distribution, detected in dorsal root ganglia (DRG) neurons (at protein level).

It is found in the cell membrane. It catalyses the reaction K(+)(in) = K(+)(out). It carries out the reaction Rb(+)(in) = Rb(+)(out). The catalysed reaction is Cs(+)(in) = Cs(+)(out). With respect to regulation, activated by stimuli such as mechanical stretch, acidic pH and polyunsaturated free fatty acids. Activated by a dihydroacridine analog, ML67-33. Inhibited by polycationic dye ruthenium red. Selectively activated by T2A3 (2-[(4-chloro-3-methylphenyl)amino] benzoic acid). Its function is as follows. K(+) channel that conducts voltage-dependent outward rectifying currents upon membrane depolarization. Voltage sensing is coupled to K(+) electrochemical gradient in an 'ion flux gating' mode where outward but not inward ion flow opens the gate. Converts to voltage-independent 'leak' conductance mode upon stimulation by various stimuli including mechanical membrane stretch, acidic pH, heat and lipids. Homo- and heterodimerizes to form functional channels with distinct regulatory and gating properties. In trigeminal ganglia sensory neurons, the heterodimer of KCNK10/TREK-2 and KCNK18/TRESK inhibits neuronal firing and neurogenic inflammation by stabilizing the resting membrane potential at K(+) equilibrium potential as well as by regulating the threshold of action potentials and the spike frequency. Permeable to other monovalent ions such as Rb(+) and Cs(+). The protein is Potassium channel subfamily K member 10 of Mus musculus (Mouse).